The sequence spans 351 residues: Fe(3+) ions import ATP-binding protein FbpC (351 aa).

The ABC transporter domain maps to 7–241; it reads LTVKNLNKFF…PNHLETAKFM (235 aa). Position 39 to 46 (39 to 46) interacts with ATP; sequence GASGCGKT.

This sequence belongs to the ABC transporter superfamily. Fe(3+) ion importer (TC 3.A.1.10) family. As to quaternary structure, the complex is composed of two ATP-binding proteins (FbpC), two transmembrane proteins (FbpB) and a solute-binding protein (FbpA).

Its subcellular location is the cell inner membrane. The enzyme catalyses Fe(3+)(out) + ATP + H2O = Fe(3+)(in) + ADP + phosphate + H(+). Part of the ABC transporter complex FbpABC involved in Fe(3+) ions import. Responsible for energy coupling to the transport system. This chain is Fe(3+) ions import ATP-binding protein FbpC, found in Haemophilus influenzae (strain 86-028NP).